Consider the following 163-residue polypeptide: Photosystem II extrinsic protein V (163 aa).

The N-terminal stretch at 1–26 (MFKTYSKSFACILFCIFNIFVVSASA) is a signal peptide. Residues Cys63, Cys66, His67, and Met130 each coordinate heme c.

Belongs to the cytochrome c family. PsbV subfamily. PSII is composed of 1 copy each of membrane proteins PsbA, PsbB, PsbC, PsbD, PsbE, PsbF, PsbH, PsbI, PsbJ, PsbK, PsbL, PsbM, PsbT, PsbY, PsbZ, Psb30/Ycf12, at least 3 peripheral proteins of the oxygen-evolving complex and a large number of cofactors. It forms dimeric complexes. The cofactor is heme c.

It localises to the plastid. It is found in the chloroplast thylakoid membrane. One of the extrinsic, lumenal subunits of photosystem II (PSII). PSII is a light-driven water plastoquinone oxidoreductase, using light energy to abstract electrons from H(2)O, generating a proton gradient subsequently used for ATP formation. The extrinsic proteins stabilize the structure of photosystem II oxygen-evolving complex (OEC), the ion environment of oxygen evolution and protect the OEC against heat-induced inactivation. The sequence is that of Photosystem II extrinsic protein V from Thalassiosira pseudonana (Marine diatom).